We begin with the raw amino-acid sequence, 166 residues long: Bacterial non-heme ferritin (166 aa).

One can recognise a Ferritin-like diiron domain in the interval 2-145 (LSKELLAALN…THIDYLTRIG (144 aa)). Fe cation-binding residues include E17, E50, H53, E94, and Q127.

This sequence belongs to the ferritin family. Prokaryotic subfamily.

The protein localises to the cytoplasm. The catalysed reaction is 4 Fe(2+) + O2 + 6 H2O = 4 iron(III) oxide-hydroxide + 12 H(+). In terms of biological role, iron-storage protein. The polypeptide is Bacterial non-heme ferritin (ftnA) (Staphylococcus epidermidis (strain ATCC 12228 / FDA PCI 1200)).